We begin with the raw amino-acid sequence, 105 residues long: uncharacterized protein (105 aa).

This is an uncharacterized protein from Acidianus bottle-shaped virus (isolate Italy/Pozzuoli) (ABV).